An 834-amino-acid polypeptide reads, in one-letter code: Periplasmic nitrate reductase (834 aa).

The segment at residues 1 to 31 (MSSELTRRNLLKAHAAGIAAATAGIALPAAA) is a signal peptide (tat-type signal). One can recognise a 4Fe-4S Mo/W bis-MGD-type domain in the interval 43–99 (IKWSKAPCRFCGTGCGVMVGVKEGKVVATHGDMQAEVNRGLNCIKGYFLSKIMYGKD). Cysteine 50, cysteine 53, cysteine 57, and cysteine 85 together coordinate [4Fe-4S] cluster. Mo-bis(molybdopterin guanine dinucleotide)-binding positions include lysine 87, glutamine 154, asparagine 179, cysteine 183, 216-223 (WGSNMAEM), 247-251 (STFTH), 266-268 (GTD), methionine 377, glutamine 381, asparagine 487, 513-514 (SD), lysine 536, aspartate 563, and 723-732 (TGRVLEHWHS). Position 799 (tryptophan 799) interacts with substrate. Asparagine 807 and lysine 824 together coordinate Mo-bis(molybdopterin guanine dinucleotide).

The protein belongs to the prokaryotic molybdopterin-containing oxidoreductase family. NasA/NapA/NarB subfamily. Component of the periplasmic nitrate reductase NapAB complex composed of NapA and NapB. [4Fe-4S] cluster is required as a cofactor. The cofactor is Mo-bis(molybdopterin guanine dinucleotide). In terms of processing, predicted to be exported by the Tat system. The position of the signal peptide cleavage has not been experimentally proven.

Its subcellular location is the periplasm. The catalysed reaction is 2 Fe(II)-[cytochrome] + nitrate + 2 H(+) = 2 Fe(III)-[cytochrome] + nitrite + H2O. Its function is as follows. Catalytic subunit of the periplasmic nitrate reductase complex NapAB. Receives electrons from NapB and catalyzes the reduction of nitrate to nitrite. The sequence is that of Periplasmic nitrate reductase from Agrobacterium fabrum (strain C58 / ATCC 33970) (Agrobacterium tumefaciens (strain C58)).